The following is a 478-amino-acid chain: Cysteine protease ATG4B (478 aa).

Residues 1–15 (MTSLPDRGVSSSSSD) show a composition bias toward polar residues. Residues 1–31 (MTSLPDRGVSSSSSDPLCEGNIAPCSSSSEQ) form a disordered region. The active-site Nucleophile is the Cys-164. Residues Asp-361 and His-363 contribute to the active site.

This sequence belongs to the peptidase C54 family. In terms of assembly, interacts with ATG8.

The protein localises to the cytoplasm. It catalyses the reaction [protein]-C-terminal L-amino acid-glycyl-phosphatidylethanolamide + H2O = [protein]-C-terminal L-amino acid-glycine + a 1,2-diacyl-sn-glycero-3-phosphoethanolamine. Cysteine protease that plays a key role in autophagy by mediating both proteolytic activation and delipidation of ATG8 family proteins. The protease activity is required for proteolytic activation of ATG8 family proteins: cleaves the C-terminal amino acid of ATG8 proteins to reveal a C-terminal glycine. Exposure of the glycine at the C-terminus is essential for ATG8 proteins conjugation to phosphatidylethanolamine (PE) and insertion to membranes, which is necessary for autophagy. In addition to the protease activity, also mediates delipidation of PE-conjugated ATG8 proteins. In Oryza sativa subsp. japonica (Rice), this protein is Cysteine protease ATG4B (ATG4B).